Reading from the N-terminus, the 60-residue chain is Ixodegrin YY-39 (60 aa).

A signal peptide spans 1–21; it reads MNAALIAALLILGALTLDATA. Positions 49 to 51 match the Cell attachment site motif; sequence RGD.

Belongs to the ixodegrin family. In terms of processing, contains 3 disulfide bonds. Expressed in salivary glands.

It is found in the secreted. In terms of biological role, tick salivary platelet aggregation inhibitor that plays an important part in the anti-hemostatic strategy of ticks. Inhibits platelet aggregation induced by ADP, thrombin and thromboxane A2 (TXA2). Blocks platelet adhesion to soluble collagen (most probably through the binding to alpha-2/beta-1 integrin (ITGA2/ITGB1)) and binds to purified glycoprotein IIb/IIIa (ITGA2B/ITGB3) in a dose-dependent manner. In vivo, reduces thrombus weight effectively in a rat arteriovenous shunt model and inhibits thrombosis in a carrageenan-induced mouse tail thrombosis model. The chain is Ixodegrin YY-39 from Ixodes scapularis (Black-legged tick).